The primary structure comprises 264 residues: MQSSKPIESHGQPIAGGKLPLICVPLVGHTLDEVMAELAIVLPKKPDVLEWRVDFFESIGDVAAVIAAAKAIKSKAGDIPLLFTRRSVMEGGEKIALNEDQVIALYGAVCESKAIDLIDYEMANETANIAQVRAAAKSNDIKLVLSFHNFSSTPGLEALASKFLMADQLGADIAKVAVMPRDPNDVLILLAATQQASQKLRIPLISMSMGPYGSLTRLFGWAFGSALTFAVGARSSAPGQVPIEDLNTVLGILRKAMGDGQTTP.

3-dehydroquinate-binding positions include 50–52 (EWR) and Arg-86. His-148 functions as the Proton donor/acceptor in the catalytic mechanism. The active-site Schiff-base intermediate with substrate is the Lys-175. Arg-217, Ser-236, and Gln-240 together coordinate 3-dehydroquinate.

The protein belongs to the type-I 3-dehydroquinase family. In terms of assembly, homodimer.

The catalysed reaction is 3-dehydroquinate = 3-dehydroshikimate + H2O. Its pathway is metabolic intermediate biosynthesis; chorismate biosynthesis; chorismate from D-erythrose 4-phosphate and phosphoenolpyruvate: step 3/7. In terms of biological role, involved in the third step of the chorismate pathway, which leads to the biosynthesis of aromatic amino acids. Catalyzes the cis-dehydration of 3-dehydroquinate (DHQ) and introduces the first double bond of the aromatic ring to yield 3-dehydroshikimate. The protein is 3-dehydroquinate dehydratase of Albidiferax ferrireducens (strain ATCC BAA-621 / DSM 15236 / T118) (Rhodoferax ferrireducens).